Here is an 804-residue protein sequence, read N- to C-terminus: uncharacterized protein (804 aa).

10 helical membrane passes run 15–35 (LLIVWLALSLAVACVLALGNI), 243–263 (FLLLSALLTLLLAVAAVAVAM), 301–321 (LSAVTGGAIGLLFENVLMVLL), 333–353 (SLWPWLWALGTMTVISLLVGL), 381–401 (FYLPIVSVVVVLLLAGLMGGS), 403–423 (LLWAVLAGAVVLALLCGVLGW), 453–473 (TLSQLSAFSLSFMLLALLLVL), 680–700 (ALEVMVVLVTACGMLLLLAQV), 734–754 (MLGFVSGLVAAIGAETALAVL), and 769–789 (LWIVLPCSGALLLSLFGGWLG).

This sequence belongs to the ABC-4 integral membrane protein family.

It localises to the cell membrane. This is an uncharacterized protein from Escherichia coli (strain K12).